Consider the following 157-residue polypeptide: UPF0262 protein RHECIAT_CH0000657 (157 aa).

Belongs to the UPF0262 family.

The protein is UPF0262 protein RHECIAT_CH0000657 of Rhizobium etli (strain CIAT 652).